The chain runs to 59 residues: MHFRIRKCPNCGRYTLKEVCPVCGSETKVAHPPRFSPEDPYGEYRRRLKRELLGIGRRS.

It belongs to the NOP10 family.

In terms of biological role, involved in ribosome biogenesis; more specifically in 18S rRNA pseudouridylation and in cleavage of pre-rRNA. The protein is Ribosome biogenesis protein Nop10 of Thermococcus kodakarensis (strain ATCC BAA-918 / JCM 12380 / KOD1) (Pyrococcus kodakaraensis (strain KOD1)).